The following is a 339-amino-acid chain: Trace amine-associated receptor 1 (339 aa).

Over 1–24 (MMPFCHNIINISCVKNNWSNDVRA) the chain is Extracellular. 3 cysteine pairs are disulfide-bonded: Cys-5-Cys-178, Cys-13-Cys-88, and Cys-96-Cys-182. N-linked (GlcNAc...) asparagine glycans are attached at residues Asn-10 and Asn-17. A helical membrane pass occupies residues 25-49 (SLYSLMVLIILTTLVGNLIVIVSIS). Over 50-59 (HFKQLHTPTN) the chain is Cytoplasmic. A helical membrane pass occupies residues 60-81 (WLIHSMATVDFLLGCLVMPYSM). Residues 82-96 (VRSAEHCWYFGEVFC) are Extracellular-facing. A helical membrane pass occupies residues 97–119 (KIHTSTDIMLSSASIFHLSFISI). A 2-phenylethylamine-binding site is contributed by Asp-103. The Cytoplasmic portion of the chain corresponds to 120–139 (DRYYAVCDPLRYKAKMNILV). The chain crosses the membrane as a helical span at residues 140 to 161 (ICVMIFISWSVPAVFAFGMIFL). Over 162–188 (ELNFKGAEEIYYKHVHCRGGCSVFFSK) the chain is Extracellular. The segment at 175-186 (HVHCRGGCSVFF) is extracellular Loop 2 (ECL2). Residues 189–211 (ISGVLTFMTSFYIPGSIMLCVYY) form a helical membrane-spanning segment. Residues 212 to 249 (RIYLIAKEQARLISDANQKLQIGLEMKNGISQSKERKA) are Cytoplasmic-facing. A helical transmembrane segment spans residues 250 to 273 (VKTLGIVMGVFLICWCPFFICTVM). Over 274–286 (DPFLHYIIPPTLN) the chain is Extracellular. Residues 287-307 (DVLIWFGYLNSTFNPMVYAFF) form a helical membrane-spanning segment. The Cytoplasmic segment spans residues 308 to 339 (YPWFRKALKMMLFGKIFQKDSSRCKLFLELSS).

This sequence belongs to the G-protein coupled receptor 1 family. As to expression, expressed at low level in both the central and peripheral nervous system. Moderately expressed in stomach. Low levels in amygdala, kidney, and lung, and small intestine. Trace amounts in cerebellum, dorsal root ganglia, hippocampus, hypothalamus, liver, medulla, pancreas, pituitary, pontine reticular formation, prostate, skeletal muscle and spleen.

The protein resides in the endomembrane system. The protein localises to the endoplasmic reticulum membrane. It localises to the cell membrane. Its activity is regulated as follows. Activated by SEP-363856 small molecule: IHCH-7179 acts both as an agonist activator for HTR1A and TAAR1. Functionally, intracellular G-protein coupled receptor for trace amines, which recognizes endogenous amine-containing metabolites such as beta-phenylethylamine (beta-PEA), 3-iodothyronamine (T1AM), isoamylamine (IAA), cadaverine (CAD), cyclohexylamine (CHA), p-tyramine (p-TYR), trimethylamine (TMA), octopamine and tryptamine. Also functions as a receptor for various drugs and psychoactive substances, such as amphetamine and methamphetamine. Unresponsive to classical biogenic amines, such as epinephrine and histamine and only partially activated by dopamine and serotonin. Expressed in both the central and peripheral nervous system: TAAR1 activation regulates the activity of several neurotransmitter signaling pathways by (1) decreasing the basal firing rates of the neurons involved and by (2) lowering the sensitivity of receptors to neurotransmitters. Ligand binding causes a conformation change that triggers signaling via guanine nucleotide-binding proteins (G proteins) and modulates the activity of downstream effectors. TAAR1 is coupled with different G(i)/G(o)-, G(s)- or G(q)/G(11) classes of G alpha proteins depending on the ligand. CAD-binding is coupled to G(i)/G(o) G alpha proteins and mediates inhibition of adenylate cyclase activity. T1AM- or beta-PEA-binding is coupled to G(s) G alpha proteins and mediates activation of adenylate cyclase activity. CHA- or IAA-binding is coupled to G(q)/G(11) G alpha proteins and activates phospholipase C-beta, releasing diacylglycerol (DAG) and inositol 1,4,5-trisphosphate (IP3) second messengers. TMA-binding is coupled with all three G(i)/G(o)-, G(s)- or G(q)/G(11) G alpha protein subtypes. Amphetamine-binding is coupled with G(s)- or G(12)/G(13) G alpha protein subtypes. The polypeptide is Trace amine-associated receptor 1 (Homo sapiens (Human)).